A 90-amino-acid chain; its full sequence is Secretory calcium-binding phosphoprotein proline-glutamine-rich 1 (90 aa).

Residues Met1 to Ala15 form the signal peptide.

In terms of tissue distribution, expressed in enamel organ.

It localises to the secreted. In terms of biological role, tooth-associated epithelia protein that may participate in structuring the basal lamina at cell-tooth interface. This is Secretory calcium-binding phosphoprotein proline-glutamine-rich 1 from Mus musculus (Mouse).